Here is a 78-residue protein sequence, read N- to C-terminus: Large ribosomal subunit protein bL28 (78 aa).

The disordered stretch occupies residues Met1–His20.

Belongs to the bacterial ribosomal protein bL28 family.

This is Large ribosomal subunit protein bL28 from Actinobacillus pleuropneumoniae serotype 7 (strain AP76).